A 487-amino-acid polypeptide reads, in one-letter code: GTPase Der (487 aa).

The 165-residue stretch at 2 to 166 folds into the EngA-type G 1 domain; the sequence is LKIAILGRPN…RIKLVANLPE (165 aa). GTP-binding positions include 8-15, 55-59, and 118-121; these read GRPNVGKS, DTGGV, and NKAD. Residues 165–194 form a disordered region; it reads PEPREEEEEGLEELSVDEHEESEAALPSNT. The segment covering 168-187 has biased composition (acidic residues); it reads REEEEEGLEELSVDEHEESE. The EngA-type G 2 domain occupies 225 to 398; that stretch reads LKIALIGRPN…AIDELHHVVS (174 aa). GTP is bound by residues 231–238, 278–282, and 343–346; these read GRPNVGKS, DTAGL, and NKWD. Positions 399–483 constitute a KH-like domain; that stretch reads NKVPTPIVNK…PFDLEFKEKP (85 aa).

This sequence belongs to the TRAFAC class TrmE-Era-EngA-EngB-Septin-like GTPase superfamily. EngA (Der) GTPase family. In terms of assembly, associates with the 50S ribosomal subunit.

Functionally, GTPase that plays an essential role in the late steps of ribosome biogenesis. The chain is GTPase Der from Chlamydia pneumoniae (Chlamydophila pneumoniae).